The sequence spans 272 residues: Type III pantothenate kinase (272 aa).

6–13 serves as a coordination point for ATP; that stretch reads NVNNTNTL. 113–116 contributes to the substrate binding site; that stretch reads GADR. The active-site Proton acceptor is the Asp115. Asp135 contacts K(+). Residue Thr138 coordinates ATP. Thr190 contacts substrate.

It belongs to the type III pantothenate kinase family. As to quaternary structure, homodimer. NH4(+) is required as a cofactor. The cofactor is K(+).

It is found in the cytoplasm. The catalysed reaction is (R)-pantothenate + ATP = (R)-4'-phosphopantothenate + ADP + H(+). It participates in cofactor biosynthesis; coenzyme A biosynthesis; CoA from (R)-pantothenate: step 1/5. In terms of biological role, catalyzes the phosphorylation of pantothenate (Pan), the first step in CoA biosynthesis. This chain is Type III pantothenate kinase, found in Acidobacterium capsulatum (strain ATCC 51196 / DSM 11244 / BCRC 80197 / JCM 7670 / NBRC 15755 / NCIMB 13165 / 161).